The chain runs to 227 residues: 7-cyano-7-deazaguanine synthase (227 aa).

Position 8–18 (8–18 (VSGGADSATVL)) interacts with ATP. Zn(2+)-binding residues include Cys-192, Cys-202, Cys-205, and Cys-208.

It belongs to the QueC family. Requires Zn(2+) as cofactor.

It carries out the reaction 7-carboxy-7-deazaguanine + NH4(+) + ATP = 7-cyano-7-deazaguanine + ADP + phosphate + H2O + H(+). Its pathway is purine metabolism; 7-cyano-7-deazaguanine biosynthesis. Its function is as follows. Catalyzes the ATP-dependent conversion of 7-carboxy-7-deazaguanine (CDG) to 7-cyano-7-deazaguanine (preQ(0)). The protein is 7-cyano-7-deazaguanine synthase of Rickettsia canadensis (strain McKiel).